A 317-amino-acid chain; its full sequence is Ribosomal protein L11 methyltransferase (317 aa).

Residues Thr-158, Gly-179, Asp-201, and Asn-244 each contribute to the S-adenosyl-L-methionine site.

Belongs to the methyltransferase superfamily. PrmA family.

It localises to the cytoplasm. The catalysed reaction is L-lysyl-[protein] + 3 S-adenosyl-L-methionine = N(6),N(6),N(6)-trimethyl-L-lysyl-[protein] + 3 S-adenosyl-L-homocysteine + 3 H(+). In terms of biological role, methylates ribosomal protein L11. In Streptococcus pyogenes serotype M5 (strain Manfredo), this protein is Ribosomal protein L11 methyltransferase.